Consider the following 439-residue polypeptide: Damage-control phosphatase ARMT1 (439 aa).

N-acetylalanine is present on alanine 2. Phosphoserine is present on serine 4. Lysine 40 is modified (N6-acetyllysine). The Mn(2+) site is built by aspartate 251 and asparagine 252. 251 to 252 (DN) is a substrate binding site. Glutamate 256 and aspartate 289 together coordinate S-adenosyl-L-methionine. Aspartate 289 serves as a coordination point for Mn(2+). Residues 365 to 369 (DLNYR) and lysine 402 contribute to the substrate site. The Subfamily III RTxK motif motif lies at 399–402 (RTLK).

It belongs to the damage-control phosphatase family. Sugar phosphate phosphatase III subfamily. The cofactor is Mn(2+). Ni(2+) is required as a cofactor. In terms of processing, automethylated.

The enzyme catalyses beta-D-fructose 1-phosphate + H2O = D-fructose + phosphate. It catalyses the reaction beta-D-fructose 6-phosphate = dihydroxyacetone + D-glyceraldehyde 3-phosphate. The catalysed reaction is L-glutamyl-[protein] + S-adenosyl-L-methionine = [protein]-L-glutamate 5-O-methyl ester + S-adenosyl-L-homocysteine. In terms of biological role, metal-dependent phosphatase that shows phosphatase activity against several substrates, including fructose-1-phosphate and fructose-6-phosphate. Its preference for fructose-1-phosphate, a strong glycating agent that causes DNA damage rather than a canonical yeast metabolite, suggests a damage-control function in hexose phosphate metabolism. Has also been shown to have O-methyltransferase activity that methylates glutamate residues of target proteins to form gamma-glutamyl methyl ester residues. Possibly methylates PCNA, suggesting it is involved in the DNA damage response. This is Damage-control phosphatase ARMT1 from Mus musculus (Mouse).